The following is a 298-amino-acid chain: Lipoyl synthase (298 aa).

Positions 40, 45, 51, 67, 71, 74, and 280 each coordinate [4Fe-4S] cluster. One can recognise a Radical SAM core domain in the interval 53–269 (AVRRTATFMI…KEIAMAKGFS (217 aa)).

The protein belongs to the radical SAM superfamily. Lipoyl synthase family. It depends on [4Fe-4S] cluster as a cofactor.

Its subcellular location is the cytoplasm. The catalysed reaction is [[Fe-S] cluster scaffold protein carrying a second [4Fe-4S](2+) cluster] + N(6)-octanoyl-L-lysyl-[protein] + 2 oxidized [2Fe-2S]-[ferredoxin] + 2 S-adenosyl-L-methionine + 4 H(+) = [[Fe-S] cluster scaffold protein] + N(6)-[(R)-dihydrolipoyl]-L-lysyl-[protein] + 4 Fe(3+) + 2 hydrogen sulfide + 2 5'-deoxyadenosine + 2 L-methionine + 2 reduced [2Fe-2S]-[ferredoxin]. Its pathway is protein modification; protein lipoylation via endogenous pathway; protein N(6)-(lipoyl)lysine from octanoyl-[acyl-carrier-protein]. Functionally, catalyzes the radical-mediated insertion of two sulfur atoms into the C-6 and C-8 positions of the octanoyl moiety bound to the lipoyl domains of lipoate-dependent enzymes, thereby converting the octanoylated domains into lipoylated derivatives. This Bacillus pumilus (strain SAFR-032) protein is Lipoyl synthase.